The sequence spans 1023 residues: MGKGVGRDKYEPAAVSEHGDKKSKKAKKERDMDELKKEVSMDDHKLSLDELHRKYGTDLSRGLTPARAAEILARDGPNALTPPPTTPEWVKFCRQLFGGFSMLLWIGAILCFLAYGIRSATEEEPPNDDLYLGVVLSAVVIITGCFSYYQEAKSSKIMESFKNMVPQQALVIRNGEKMSINAEDVVVGDLVEVKGGDRIPADLRIISANGCKVDNSSLTGESEPQTRSPDFTNENPLETRNIAFFSTNCVEGTARGIVVYTGDRTVMGRIATLASGLEGGQTPIAEEIEHFIHLITGVAVFLGVSFFILSLILEYTWLEAVIFLIGIIVANVPEGLLATVTVCLTLTAKRMARKNCLVKNLEAVETLGSTSTICSDKTGTLTQNRMTVAHMWFDNQIHEADTTENQSGVSFDKTSATWFALSRIAGLCNRAVFQANQENLPILKRAVAGDASESALLKCIEVCCGSVMEMREKYTKIVEIPFNSTNKYQLSIHKNPNASEPKHLLVMKGAPERILDRCSSILLHGKEQPLDEELKDAFQNAYLELGGLGERVLGFCHLLLPDEQFPEGFQFDTDEVNFPVDNLCFVGLISMIDPPRAAVPDAVGKCRSAGIKVIMVTGDHPITAKAIAKGVGIISEGNETVEDIAARLNIPVNQVNPRDAKACVVHGSDLKDMTSEELDDILRYHTEIVFARTSPQQKLIIVEGCQRQGAIVAVTGDGVNDSPALKKADIGVAMGIVGSDVSKQAADMILLDDNFASIVTGVEEGRLIFDNLKKSIAYTLTSNIPEITPFLIFIIANIPLPLGTVTILCIDLGTDMVPAISLAYEQAESDIMKRQPRNPKTDKLVNERLISMAYGQIGMIQALGGFFTYFVILAENGFLPFHLLGIRETWDDRWINDVEDSYGQQWTYEQRKIVEFTCHTAFFVSIVVVQWADLVICKTRRNSVFQQGMKNKILIFGLFEETALAAFLSYCPGMGAALRMYPLKPTWWFCAFPYSLLIFVYDEVRKLIIRRRPGGWVEKETYY.

A propeptide spanning residues 1 to 5 is cleaved from the precursor; the sequence is MGKGV. A compositionally biased stretch (basic and acidic residues) spans 1–11; the sequence is MGKGVGRDKYE. The disordered stretch occupies residues 1–38; that stretch reads MGKGVGRDKYEPAAVSEHGDKKSKKAKKERDMDELKKE. Over 6 to 87 the chain is Cytoplasmic; it reads GRDKYEPAAV…NALTPPPTTP (82 aa). Lysine 9 carries the N6-acetyllysine modification. Residue tyrosine 10 is modified to Phosphotyrosine. Serine 16 is subject to Phosphoserine; by PKC. Lysine 21 is subject to N6-acetyllysine. Serine 23 is subject to Phosphoserine; by PKC. The segment covering 28–38 has biased composition (basic and acidic residues); the sequence is KERDMDELKKE. A phosphoserine mark is found at serine 40 and serine 47. Residues 82–84 are phosphoinositide-3 kinase binding; the sequence is PPP. A helical membrane pass occupies residues 88–108; that stretch reads EWVKFCRQLFGGFSMLLWIGA. Residues 109 to 131 are Extracellular-facing; it reads ILCFLAYGIRSATEEEPPNDDLY. Residues 132–152 form a helical membrane-spanning segment; it reads LGVVLSAVVIITGCFSYYQEA. Residues 153–288 lie on the Cytoplasmic side of the membrane; sequence KSSKIMESFK…GGQTPIAEEI (136 aa). Residues 216-235 are disordered; the sequence is SSLTGESEPQTRSPDFTNEN. At serine 228 the chain carries Phosphoserine. A Phosphotyrosine modification is found at tyrosine 260. A helical membrane pass occupies residues 289-308; it reads EHFIHLITGVAVFLGVSFFI. Residues 309 to 320 lie on the Extracellular side of the membrane; that stretch reads LSLILEYTWLEA. The helical transmembrane segment at 321 to 338 threads the bilayer; it reads VIFLIGIIVANVPEGLLA. The Cytoplasmic portion of the chain corresponds to 339–772; that stretch reads TVTVCLTLTA…EEGRLIFDNL (434 aa). Residue aspartate 376 is the 4-aspartylphosphate intermediate of the active site. Phosphoserine is present on residues serine 452 and serine 484. Position 487 (lysine 487) interacts with ATP. Tyrosine 542 bears the Phosphotyrosine mark. The interval 596–717 is mediates interaction with SCN7A; that stretch reads RAAVPDAVGK…QGAIVAVTGD (122 aa). An N6-succinyllysine modification is found at lysine 661. 2 positions are modified to phosphoserine: serine 668 and serine 675. 2 residues coordinate Mg(2+): aspartate 717 and aspartate 721. The helical transmembrane segment at 773–792 threads the bilayer; sequence KKSIAYTLTSNIPEITPFLI. Residues 793 to 802 are Extracellular-facing; the sequence is FIIANIPLPL. Residues 803-823 traverse the membrane as a helical segment; it reads GTVTILCIDLGTDMVPAISLA. Residues 824 to 843 are Cytoplasmic-facing; it reads YEQAESDIMKRQPRNPKTDK. A helical transmembrane segment spans residues 844 to 866; sequence LVNERLISMAYGQIGMIQALGGF. Over 867–918 the chain is Extracellular; that stretch reads FTYFVILAENGFLPFHLLGIRETWDDRWINDVEDSYGQQWTYEQRKIVEFTC. Residues 919–938 form a helical membrane-spanning segment; sequence HTAFFVSIVVVQWADLVICK. Residues 939–951 are Cytoplasmic-facing; the sequence is TRRNSVFQQGMKN. Serine 943 bears the Phosphoserine; by PKA mark. The chain crosses the membrane as a helical span at residues 952–970; it reads KILIFGLFEETALAAFLSY. Over 971–985 the chain is Extracellular; the sequence is CPGMGAALRMYPLKP. Residues 986 to 1006 traverse the membrane as a helical segment; sequence TWWFCAFPYSLLIFVYDEVRK. At 1007 to 1023 the chain is on the cytoplasmic side; that stretch reads LIIRRRPGGWVEKETYY.

This sequence belongs to the cation transport ATPase (P-type) (TC 3.A.3) family. Type IIC subfamily. As to quaternary structure, the sodium/potassium-transporting ATPase is composed of a catalytic alpha subunit, an auxiliary non-catalytic beta subunit and an additional regulatory subunit. Interacts with regulatory subunit FXYD1. Interacts with regulatory subunit FXYD3. Interacts with SLC35G1 and STIM1. Interacts with SIK1. Interacts with CLN3; this interaction regulates the sodium/potassium-transporting ATPase complex localization at the plasma membrane. Interacts with SCN7A; activates ATP1A1 P-type sodium:potassium-exchanging transporter activity which indirectly signals to nearby neurons to regulate sodium homeostasis. Post-translationally, phosphorylation on Tyr-10 modulates pumping activity. Phosphorylation of Ser-943 by PKA modulates the response of ATP1A1 to PKC. Dephosphorylation by protein phosphatase 2A (PP2A) following increases in intracellular sodium, leading to increase catalytic activity. In terms of tissue distribution, expressed in the central nervous system, in most motor and sensory axons of the ventral and dorsal roots, as well as in the large motor neurons of the ventral horn (at protein level).

The protein localises to the cell membrane. The protein resides in the basolateral cell membrane. It is found in the sarcolemma. It localises to the cell projection. Its subcellular location is the axon. The protein localises to the melanosome. The enzyme catalyses K(+)(out) + Na(+)(in) + ATP + H2O = K(+)(in) + Na(+)(out) + ADP + phosphate + H(+). This is the catalytic component of the active enzyme, which catalyzes the hydrolysis of ATP coupled with the exchange of sodium and potassium ions across the plasma membrane. This action creates the electrochemical gradient of sodium and potassium ions, providing the energy for active transport of various nutrients. Could also be part of an osmosensory signaling pathway that senses body-fluid sodium levels and controls salt intake behavior as well as voluntary water intake to regulate sodium homeostasis. This is Sodium/potassium-transporting ATPase subunit alpha-1 (Atp1a1) from Rattus norvegicus (Rat).